A 218-amino-acid polypeptide reads, in one-letter code: uncharacterized protein (218 aa).

Positions 57, 59, 61, 62, 138, 158, and 199 each coordinate Zn(2+).

This sequence belongs to the metallo-beta-lactamase superfamily. Glyoxalase II family. It depends on Zn(2+) as a cofactor.

This is an uncharacterized protein from Mycobacterium leprae (strain TN).